The sequence spans 446 residues: Adenylosuccinate synthetase (446 aa).

GTP is bound by residues 12 to 18 and 40 to 42; these read GDEGKGK and GHT. The active-site Proton acceptor is Asp-13. Mg(2+) contacts are provided by Asp-13 and Gly-40. IMP-binding positions include 13 to 16, 38 to 41, Thr-128, Arg-142, Gln-223, Thr-238, and Arg-302; these read DEGK and NAGH. His-41 functions as the Proton donor in the catalytic mechanism. 298-304 serves as a coordination point for substrate; that stretch reads TTTGRRR. GTP-binding positions include Arg-304, 330–332, and 412–414; these read KLD and SLG.

The protein belongs to the adenylosuccinate synthetase family. In terms of assembly, homodimer. The cofactor is Mg(2+).

It localises to the cytoplasm. The enzyme catalyses IMP + L-aspartate + GTP = N(6)-(1,2-dicarboxyethyl)-AMP + GDP + phosphate + 2 H(+). It functions in the pathway purine metabolism; AMP biosynthesis via de novo pathway; AMP from IMP: step 1/2. In terms of biological role, plays an important role in the de novo pathway of purine nucleotide biosynthesis. Catalyzes the first committed step in the biosynthesis of AMP from IMP. The chain is Adenylosuccinate synthetase from Crocosphaera subtropica (strain ATCC 51142 / BH68) (Cyanothece sp. (strain ATCC 51142)).